Reading from the N-terminus, the 545-residue chain is uncharacterized protein (545 aa).

A compositionally biased stretch (basic residues) spans 1–10; the sequence is MSRYRFRKAR. The tract at residues 1-25 is disordered; the sequence is MSRYRFRKARSNWPMGQNDSRWEPP. 2 WD repeats span residues 417–456 and 460–501; these read ACNT…NPMM and GHSN…MLCS.

This is an uncharacterized protein from Caenorhabditis elegans.